The sequence spans 174 residues: Large ribosomal subunit protein uL15 (174 aa).

Disordered stretches follow at residues 1–56 (MKLH…GQMR) and 150–174 (VERR…TPGA). Gly residues predominate over residues 21–35 (RGIGSGKGKTGGKGM).

This sequence belongs to the universal ribosomal protein uL15 family. As to quaternary structure, part of the 50S ribosomal subunit.

Its function is as follows. Binds to the 23S rRNA. In Roseiflexus castenholzii (strain DSM 13941 / HLO8), this protein is Large ribosomal subunit protein uL15.